A 327-amino-acid chain; its full sequence is Aspartate carbamoyltransferase catalytic subunit (327 aa).

Positions 54 and 55 each coordinate carbamoyl phosphate. Residue Lys82 participates in L-aspartate binding. Carbamoyl phosphate is bound by residues Arg104, His134, and Gln137. 2 residues coordinate L-aspartate: Arg177 and Arg232. Residues Gly280 and Pro281 each coordinate carbamoyl phosphate.

It belongs to the aspartate/ornithine carbamoyltransferase superfamily. ATCase family. As to quaternary structure, heterododecamer (2C3:3R2) of six catalytic PyrB chains organized as two trimers (C3), and six regulatory PyrI chains organized as three dimers (R2).

The enzyme catalyses carbamoyl phosphate + L-aspartate = N-carbamoyl-L-aspartate + phosphate + H(+). It participates in pyrimidine metabolism; UMP biosynthesis via de novo pathway; (S)-dihydroorotate from bicarbonate: step 2/3. Functionally, catalyzes the condensation of carbamoyl phosphate and aspartate to form carbamoyl aspartate and inorganic phosphate, the committed step in the de novo pyrimidine nucleotide biosynthesis pathway. The polypeptide is Aspartate carbamoyltransferase catalytic subunit (Micrococcus luteus (strain ATCC 4698 / DSM 20030 / JCM 1464 / CCM 169 / CCUG 5858 / IAM 1056 / NBRC 3333 / NCIMB 9278 / NCTC 2665 / VKM Ac-2230) (Micrococcus lysodeikticus)).